An 88-amino-acid polypeptide reads, in one-letter code: Small ribosomal subunit protein bS20 (88 aa).

The disordered stretch occupies residues 1–27 (MANIKSQIKRNKTNEKARLRNKAVKSS).

This sequence belongs to the bacterial ribosomal protein bS20 family.

Its function is as follows. Binds directly to 16S ribosomal RNA. In Streptomyces griseus subsp. griseus (strain JCM 4626 / CBS 651.72 / NBRC 13350 / KCC S-0626 / ISP 5235), this protein is Small ribosomal subunit protein bS20.